A 413-amino-acid chain; its full sequence is Arginine deiminase (413 aa).

Cysteine 403 acts as the Amidino-cysteine intermediate in catalysis.

The protein belongs to the arginine deiminase family.

It localises to the cytoplasm. It carries out the reaction L-arginine + H2O = L-citrulline + NH4(+). Its pathway is amino-acid degradation; L-arginine degradation via ADI pathway; carbamoyl phosphate from L-arginine: step 1/2. In Clostridium perfringens (strain SM101 / Type A), this protein is Arginine deiminase.